Consider the following 500-residue polypeptide: Glycerol kinase (500 aa).

Threonine 13 contacts ADP. Residues threonine 13, threonine 14, and serine 15 each coordinate ATP. A sn-glycerol 3-phosphate-binding site is contributed by threonine 13. Arginine 17 contributes to the ADP binding site. Sn-glycerol 3-phosphate contacts are provided by arginine 83, glutamate 84, tyrosine 135, and aspartate 244. 5 residues coordinate glycerol: arginine 83, glutamate 84, tyrosine 135, aspartate 244, and glutamine 245. Positions 266 and 309 each coordinate ADP. The ATP site is built by threonine 266, glycine 309, glutamine 313, and glycine 410. Residues glycine 410 and asparagine 414 each coordinate ADP.

It belongs to the FGGY kinase family.

It carries out the reaction glycerol + ATP = sn-glycerol 3-phosphate + ADP + H(+). The protein operates within polyol metabolism; glycerol degradation via glycerol kinase pathway; sn-glycerol 3-phosphate from glycerol: step 1/1. Its activity is regulated as follows. Inhibited by fructose 1,6-bisphosphate (FBP). Its function is as follows. Key enzyme in the regulation of glycerol uptake and metabolism. Catalyzes the phosphorylation of glycerol to yield sn-glycerol 3-phosphate. The sequence is that of Glycerol kinase from Burkholderia cenocepacia (strain HI2424).